We begin with the raw amino-acid sequence, 635 residues long: Chaperone protein HtpG (635 aa).

Residues 1–343 form an a; substrate-binding region; the sequence is MSVETQKETL…SNDLSLNVSR (343 aa). Residues 344–560 form a b region; it reads EILQKDPIID…EQDMGLQMRQ (217 aa). The interval 561–635 is c; it reads ILEASGQKVP…LNKLLVELSV (75 aa).

This sequence belongs to the heat shock protein 90 family. Homodimer.

Its subcellular location is the cytoplasm. Its function is as follows. Molecular chaperone. Has ATPase activity. This is Chaperone protein HtpG from Pseudomonas syringae pv. tomato (strain ATCC BAA-871 / DC3000).